A 351-amino-acid polypeptide reads, in one-letter code: uncharacterized protein (351 aa).

This is an uncharacterized protein from Caenorhabditis elegans.